The sequence spans 365 residues: Geranylgeranyl pyrophosphate synthase (365 aa).

Over residues 1–11 the composition is skewed to polar residues; that stretch reads MKPLPSTNGKV. A disordered region spans residues 1-36; the sequence is MKPLPSTNGKVNGNGKHHDSSLSSTSSTSSSSSSDT. A compositionally biased stretch (low complexity) spans 21–34; the sequence is SLSSTSSTSSSSSS. Lys-78, Arg-81, and His-110 together coordinate isopentenyl diphosphate. Residues Asp-117 and Asp-121 each coordinate Mg(2+). Dimethylallyl diphosphate is bound at residue Arg-126. Position 127 (Arg-127) interacts with isopentenyl diphosphate. Dimethylallyl diphosphate is bound by residues Lys-211, Thr-212, and Gln-247. Asp-250 serves as a coordination point for Mg(2+). Dimethylallyl diphosphate is bound by residues Asn-254, Lys-263, and Lys-273.

Belongs to the FPP/GGPP synthase family. The cofactor is Mg(2+).

The enzyme catalyses isopentenyl diphosphate + dimethylallyl diphosphate = (2E)-geranyl diphosphate + diphosphate. It catalyses the reaction isopentenyl diphosphate + (2E)-geranyl diphosphate = (2E,6E)-farnesyl diphosphate + diphosphate. It carries out the reaction isopentenyl diphosphate + (2E,6E)-farnesyl diphosphate = (2E,6E,10E)-geranylgeranyl diphosphate + diphosphate. Its function is as follows. Geranylgeranyl pyrophosphate synthase that catalyzes the trans-addition of the three molecules of IPP onto DMAPP to form geranylgeranyl pyrophosphate. Does not show any monoterpene nor sesquiterpene synthase activity. This Melampsora lini (Rust fungus) protein is Geranylgeranyl pyrophosphate synthase.